The chain runs to 118 residues: UPF0449 protein C19orf25 homolog (118 aa).

Tyr-63 bears the Phosphotyrosine mark. Residues 69–105 adopt a coiled-coil conformation; it reads YVAMNQRLQQAGAQLEQKRADLQQAGEELERDISQVG.

This sequence belongs to the UPF0449 family.

This is UPF0449 protein C19orf25 homolog from Bos taurus (Bovine).